The following is a 545-amino-acid chain: Coiled-coil domain-containing protein 60 (545 aa).

Positions 72–99 (NILREENAMKKKQQLLQKLKEEELNKFQ) form a coiled coil. The disordered stretch occupies residues 224–284 (PAIRTAMASR…DNESSSTKPE (61 aa)). Low complexity predominate over residues 238–259 (RGSTLSLTRTSGGSSPQSSMMS).

This Mus musculus (Mouse) protein is Coiled-coil domain-containing protein 60 (Ccdc60).